The sequence spans 287 residues: Probable prolyl 4-hydroxylase 3 (287 aa).

At 1–16 the chain is on the cytoplasmic side; it reads MAKLRHSRFQARKWST. A helical; Signal-anchor for type II membrane protein membrane pass occupies residues 17–37; the sequence is LMLVLFMLFMLTIVLLMLLAF. Residues 38 to 287 lie on the Lumenal side of the membrane; sequence GVFSLPINND…KWMHVGEYKI (250 aa). The 124-residue stretch at 159 to 282 folds into the Fe2OG dioxygenase domain; sequence HGEGLQVLHY…KWSSTKWMHV (124 aa). 2 residues coordinate Fe cation: His-177 and Asp-179. A glycan (N-linked (GlcNAc...) asparagine) is linked at Asn-218. His-263 serves as a coordination point for Fe cation. Residue Lys-273 participates in 2-oxoglutarate binding.

The protein belongs to the P4HA family. Fe(2+) is required as a cofactor. Requires L-ascorbate as cofactor.

Its subcellular location is the endoplasmic reticulum membrane. The enzyme catalyses L-prolyl-[collagen] + 2-oxoglutarate + O2 = trans-4-hydroxy-L-prolyl-[collagen] + succinate + CO2. Its function is as follows. Catalyzes the post-translational formation of 4-hydroxyproline in -Xaa-Pro-Gly- sequences in proline-rich peptide sequences of plant glycoproteins and other proteins. Hydroxyprolines are important constituent of many plant cell wall glycoproteins such as extensins, hydroxyproline-rich glycoproteins, lectins and arabinogalactan proteins. This chain is Probable prolyl 4-hydroxylase 3, found in Arabidopsis thaliana (Mouse-ear cress).